A 513-amino-acid polypeptide reads, in one-letter code: Membrane protein (513 aa).

Repeat copies occupy residues 9–11 (PSA), 12–14 (PSA), 15–17 (PSA), and 18–20 (PSA). Positions 9 to 20 (PSAPSAPSAPSA) are 4 X 3 AA tandem repeats of P-S-A. The next 14 helical transmembrane spans lie at 32-52 (LTLHWGLFAAVAALLVVLAIP), 56-76 (GLTVAGQRMLAILAFAIVVWI), 79-99 (AVSYETSAIMITSLMAGLIGF), 126-146 (TALALVAAALFISAAMTVTGL), 165-185 (ILIGTIAVTIALSLVVPSATA), 208-228 (NIAAGIMITVAQATSIWNVGI), 254-274 (QWLIAGAPWAIAMSVVLYFLV), 309-329 (LAAVSLGLLLFWATEGKLHSF), 332-352 (ATVTFVGLVILMMPRIGVMDW), 360-380 (PWGTLIVFGVGISLGTALLST), 400-420 (GALLVFAILSAFLILIHLGFA), 422-442 (ATALTAALLPILIAVLQTLPG), 447-467 (VGMTMLLGFTVSFGFILPINA), and 487-507 (IGIPVTIIGYAMMLLFAATYW).

This sequence belongs to the SLC13A/DASS transporter (TC 2.A.47) family. DIT1 subfamily.

It is found in the cell membrane. This chain is Membrane protein, found in Cupriavidus necator (strain ATCC 17699 / DSM 428 / KCTC 22496 / NCIMB 10442 / H16 / Stanier 337) (Ralstonia eutropha).